We begin with the raw amino-acid sequence, 429 residues long: Forkhead box protein A1-A (429 aa).

The fork-head DNA-binding region spans 159–253; sequence KPPYSYISLI…ENGCYLRRQK (95 aa). The span at 258 to 274 shows a compositional bias: basic and acidic residues; it reads EKTQGGKGNQDGRKDHS. The segment at 258–341 is disordered; that stretch reads EKTQGGKGNQ…HSTHSLAHES (84 aa). Positions 287–304 are enriched in low complexity; that stretch reads SSQMDSSSSMSNPSSSPQ. Over residues 325 to 336 the composition is skewed to polar residues; that stretch reads PLSSHQNHSTHS.

As to expression, at neurula stage, expressed in the notochord but not in the neural floor plate. During tailbud stages, expressed in the neural floor plate. At stage 35, expressed in the rhombencephalon, mesencephalon, pharyngeal pouches, foregut and pronephros. At stage 44, expressed in a region of the gut on the right hand side of the embryo. Expressed in the adult lung and liver.

It localises to the nucleus. Its function is as follows. Probable transcription factor. This is Forkhead box protein A1-A (foxa1-a) from Xenopus laevis (African clawed frog).